We begin with the raw amino-acid sequence, 169 residues long: S-ribosylhomocysteine lyase (169 aa).

Residues His54, His58, and Cys128 each coordinate Fe cation.

This sequence belongs to the LuxS family. Homodimer. Requires Fe cation as cofactor.

The enzyme catalyses S-(5-deoxy-D-ribos-5-yl)-L-homocysteine = (S)-4,5-dihydroxypentane-2,3-dione + L-homocysteine. In terms of biological role, involved in the synthesis of autoinducer 2 (AI-2) which is secreted by bacteria and is used to communicate both the cell density and the metabolic potential of the environment. The regulation of gene expression in response to changes in cell density is called quorum sensing. Catalyzes the transformation of S-ribosylhomocysteine (RHC) to homocysteine (HC) and 4,5-dihydroxy-2,3-pentadione (DPD). The protein is S-ribosylhomocysteine lyase of Shewanella putrefaciens (strain CN-32 / ATCC BAA-453).